We begin with the raw amino-acid sequence, 515 residues long: Fatty acyl-CoA reductase 2 (515 aa).

Residues M1–N465 lie on the Cytoplasmic side of the membrane. Residues I466 to A484 traverse the membrane as a helical segment. Residues R485–V515 are Peroxisomal-facing.

Belongs to the fatty acyl-CoA reductase family.

It is found in the peroxisome membrane. It catalyses the reaction a long-chain fatty acyl-CoA + 2 NADPH + 2 H(+) = a long-chain primary fatty alcohol + 2 NADP(+) + CoA. It carries out the reaction hexadecanoyl-CoA + 2 NADPH + 2 H(+) = hexadecan-1-ol + 2 NADP(+) + CoA. The enzyme catalyses octadecanoyl-CoA + 2 NADPH + 2 H(+) = octadecan-1-ol + 2 NADP(+) + CoA. The catalysed reaction is a very long-chain fatty acyl-CoA + 2 NADPH + 2 H(+) = a very long-chain primary fatty alcohol + 2 NADP(+) + CoA. It catalyses the reaction an ultra-long-chain fatty acyl-CoA + 2 NADPH + 2 H(+) = an ultra long-chain primary fatty alcohol + 2 NADP(+) + CoA. It carries out the reaction eicosanoyl-CoA + 2 NADPH + 2 H(+) = eicosan-1-ol + 2 NADP(+) + CoA. The enzyme catalyses docosanoyl-CoA + 2 NADPH + 2 H(+) = docosan-1-ol + 2 NADP(+) + CoA. The catalysed reaction is tetracosanoyl-CoA + 2 NADPH + 2 H(+) = tetracosan-1-ol + 2 NADP(+) + CoA. It catalyses the reaction hexacosanoyl-CoA + 2 NADPH + 2 H(+) = hexacosan-1-ol + 2 NADP(+) + CoA. It carries out the reaction octacosanoyl-CoA + 2 NADPH + 2 H(+) = octacosan-1-ol + 2 NADP(+) + CoA. The enzyme catalyses triacontanoyl-CoA + 2 NADPH + 2 H(+) = triacontan-1-ol + 2 NADP(+) + CoA. The catalysed reaction is 18-methylnonadecanoyl-CoA + 2 NADPH + 2 H(+) = 18-methylnonadecan-1-ol + 2 NADP(+) + CoA. It catalyses the reaction 20-methylheneicosanoyl-CoA + 2 NADPH + 2 H(+) = 20-methylheneicosan-1-ol + 2 NADP(+) + CoA. It carries out the reaction 22-methyltricosanoyl-CoA + 2 NADPH + 2 H(+) = 22-methyltricosan-1-ol + 2 NADP(+) + CoA. The enzyme catalyses 24-methylpentacosanoyl-CoA + 2 NADPH + 2 H(+) = 24-methylpentacosan-1-ol + 2 NADP(+) + CoA. In terms of biological role, catalyzes the reduction of saturated but not unsaturated C16 or C18 fatty acyl-CoA to fatty alcohols (FAls). A lower activity can be observed with shorter fatty acyl-CoA substrates. Can produce very long-chain and ultra long-chain FAls, regardless of whether they have a straight or branched chain. Involved in the production of ether lipids/plasmalogens and wax monoesters whose synthesis requires FAls as substrates. This chain is Fatty acyl-CoA reductase 2, found in Bos taurus (Bovine).